A 318-amino-acid polypeptide reads, in one-letter code: Methionyl-tRNA formyltransferase (318 aa).

111–114 (SLLP) contributes to the (6S)-5,6,7,8-tetrahydrofolate binding site.

It belongs to the Fmt family.

The enzyme catalyses L-methionyl-tRNA(fMet) + (6R)-10-formyltetrahydrofolate = N-formyl-L-methionyl-tRNA(fMet) + (6S)-5,6,7,8-tetrahydrofolate + H(+). Functionally, attaches a formyl group to the free amino group of methionyl-tRNA(fMet). The formyl group appears to play a dual role in the initiator identity of N-formylmethionyl-tRNA by promoting its recognition by IF2 and preventing the misappropriation of this tRNA by the elongation apparatus. This chain is Methionyl-tRNA formyltransferase, found in Chlorobium limicola (strain DSM 245 / NBRC 103803 / 6330).